Consider the following 100-residue polypeptide: MFAIIKTGGKQVKVEPGQEIFIEKIKGEVNDKIAFDEILMIDGQIGTPTIEGAKVLGTIVKQGKAKKIRVIRYHPKKNVNKIYGHRQPYTKVKIEEISAK.

Belongs to the bacterial ribosomal protein bL21 family. Part of the 50S ribosomal subunit. Contacts protein L20.

Its function is as follows. This protein binds to 23S rRNA in the presence of protein L20. This Mycoplasma capricolum subsp. capricolum (strain California kid / ATCC 27343 / NCTC 10154) protein is Large ribosomal subunit protein bL21.